We begin with the raw amino-acid sequence, 780 residues long: ATP-dependent 6-phosphofructokinase, liver type (780 aa).

Ala-2 carries the post-translational modification N-acetylalanine. The N-terminal catalytic PFK domain 1 stretch occupies residues 2–390; it reads AAVDLEKLRA…NWNIYKLLAH (389 aa). Residues Gly-25, 88 to 89, and 118 to 121 contribute to the ATP site; these read RC and GDGS. Asp-119 is a Mg(2+) binding site. Substrate is bound by residues 164 to 166, Arg-201, 208 to 210, Glu-264, Arg-292, and 298 to 301; these read SID, MGR, and HVQR. The Proton acceptor role is filled by Asp-166. The residue at position 377 (Ser-377) is a Phosphoserine. The tract at residues 391 to 400 is interdomain linker; that stretch reads QKPPKEKSNF. The C-terminal regulatory PFK domain 2 stretch occupies residues 401–780; sequence SLAILNVGAP…RRTLSMDKGF (380 aa). Beta-D-fructose 2,6-bisphosphate-binding positions include Arg-470, 527–531, Arg-565, 572–574, and Glu-628; these read TISNN and MGG. An O-linked (GlcNAc) serine glycan is attached at Ser-529. Tyr-640 carries the post-translational modification Phosphotyrosine. Residues Arg-654, 660-663, and Arg-734 contribute to the beta-D-fructose 2,6-bisphosphate site; that span reads HLQQ. Ser-775 is subject to Phosphoserine.

This sequence belongs to the phosphofructokinase type A (PFKA) family. ATP-dependent PFK group I subfamily. Eukaryotic two domain clade 'E' sub-subfamily. Homo- and heterotetramers. Phosphofructokinase (PFK) enzyme functions as a tetramer composed of different combinations of 3 types of subunits, called PFKM (M), PFKL (L) and PFKP (P). The composition of the PFK tetramer differs according to the tissue type it is present in. The kinetic and regulatory properties of the tetrameric enzyme are dependent on the subunit composition, hence can vary across tissues. Mg(2+) is required as a cofactor. Post-translationally, glcNAcylation at Ser-529 by OGT decreases enzyme activity, leading to redirect glucose flux through the oxidative pentose phosphate pathway. Glycosylation is stimulated by both hypoxia and glucose deprivation.

It is found in the cytoplasm. It carries out the reaction beta-D-fructose 6-phosphate + ATP = beta-D-fructose 1,6-bisphosphate + ADP + H(+). It functions in the pathway carbohydrate degradation; glycolysis; D-glyceraldehyde 3-phosphate and glycerone phosphate from D-glucose: step 3/4. Its activity is regulated as follows. Allosterically activated by ADP, AMP, or fructose 2,6-bisphosphate, and allosterically inhibited by ATP or citrate. GlcNAcylation by OGT overcomes allosteric regulation. Its function is as follows. Catalyzes the phosphorylation of D-fructose 6-phosphate to fructose 1,6-bisphosphate by ATP, the first committing step of glycolysis. Negatively regulates the phagocyte oxidative burst in response to bacterial infection by controlling cellular NADPH biosynthesis and NADPH oxidase-derived reactive oxygen species. Upon macrophage activation, drives the metabolic switch toward glycolysis, thus preventing glucose turnover that produces NADPH via pentose phosphate pathway. This chain is ATP-dependent 6-phosphofructokinase, liver type (PFKL), found in Pongo abelii (Sumatran orangutan).